Here is a 237-residue protein sequence, read N- to C-terminus: LexA repressor (237 aa).

A DNA-binding region (H-T-H motif) is located at residues 26-46; sequence FDEMKIALELTSKSGIHRLIT. Catalysis depends on for autocatalytic cleavage activity residues serine 158 and lysine 196.

This sequence belongs to the peptidase S24 family. Homodimer.

It carries out the reaction Hydrolysis of Ala-|-Gly bond in repressor LexA.. Its function is as follows. Represses a number of genes involved in the response to DNA damage (SOS response), including recA and lexA. In the presence of single-stranded DNA, RecA interacts with LexA causing an autocatalytic cleavage which disrupts the DNA-binding part of LexA, leading to derepression of the SOS regulon and eventually DNA repair. The protein is LexA repressor of Bartonella quintana (strain Toulouse) (Rochalimaea quintana).